The chain runs to 107 residues: U1-lycotoxin-Ls1i (107 aa).

Residues 1–20 form the signal peptide; the sequence is MMKVLVVVALLVTLISYSSS. The propeptide occupies 21-41; it reads EGIDDLEADELLSLMANEQTR. Intrachain disulfides connect Cys44–Cys59, Cys51–Cys68, Cys58–Cys86, and Cys70–Cys84.

This sequence belongs to the neurotoxin 19 (CSTX) family. 04 (U1-Lctx) subfamily. As to expression, expressed by the venom gland.

The protein localises to the secreted. The sequence is that of U1-lycotoxin-Ls1i from Lycosa singoriensis (Wolf spider).